Reading from the N-terminus, the 342-residue chain is Anthranilate phosphoribosyltransferase (342 aa).

5-phospho-alpha-D-ribose 1-diphosphate is bound by residues G83, 86 to 87, T91, 93 to 96, 111 to 119, and A123; these read GD, NIST, and KHGGRSVSS. G83 is an anthranilate binding site. S95 is a Mg(2+) binding site. R169 lines the anthranilate pocket. The Mg(2+) site is built by D228 and E229.

It belongs to the anthranilate phosphoribosyltransferase family. In terms of assembly, homodimer. The cofactor is Mg(2+).

It catalyses the reaction N-(5-phospho-beta-D-ribosyl)anthranilate + diphosphate = 5-phospho-alpha-D-ribose 1-diphosphate + anthranilate. The protein operates within amino-acid biosynthesis; L-tryptophan biosynthesis; L-tryptophan from chorismate: step 2/5. Functionally, catalyzes the transfer of the phosphoribosyl group of 5-phosphorylribose-1-pyrophosphate (PRPP) to anthranilate to yield N-(5'-phosphoribosyl)-anthranilate (PRA). The polypeptide is Anthranilate phosphoribosyltransferase (Neisseria gonorrhoeae (strain ATCC 700825 / FA 1090)).